A 414-amino-acid polypeptide reads, in one-letter code: Transforming growth factor beta-2 proprotein (414 aa).

Residues 1–20 (MHYCVLSTFLLLHLVPVALS) form the signal peptide. N-linked (GlcNAc...) asparagine glycans are attached at residues Asn-72, Asn-140, and Asn-241. Disulfide bonds link Cys-309–Cys-318, Cys-317–Cys-380, Cys-346–Cys-411, and Cys-350–Cys-413.

This sequence belongs to the TGF-beta family. As to quaternary structure, interacts with the serine proteases, HTRA1 and HTRA3. Interacts with ASPN. Interacts with MFAP5. Interacts with Transforming growth factor beta-2 (TGF-beta-2) chain; interaction is non-covalent and maintains (TGF-beta-2) in a latent state. Interacts with LRRC32/GARP; leading to regulate activation of TGF-beta-2. Interacts with NREP; the interaction results in a decrease in TGFB2 autoinduction. In terms of assembly, transforming growth factor beta-2: Homodimer; disulfide-linked. Transforming growth factor beta-2: Interacts with TGF-beta receptors (TGFBR1 and TGFBR2), leading to signal transduction. Post-translationally, the precursor proprotein is cleaved in the Golgi apparatus to form Transforming growth factor beta-2 (TGF-beta-2) and Latency-associated peptide (LAP) chains, which remain non-covalently linked, rendering TGF-beta-2 inactive.

It is found in the secreted. Its subcellular location is the extracellular space. The protein resides in the extracellular matrix. Precursor of the Latency-associated peptide (LAP) and Transforming growth factor beta-2 (TGF-beta-2) chains, which constitute the regulatory and active subunit of TGF-beta-2, respectively. In terms of biological role, required to maintain the Transforming growth factor beta-2 (TGF-beta-2) chain in a latent state during storage in extracellular matrix. Associates non-covalently with TGF-beta-2 and regulates its activation via interaction with 'milieu molecules', such as LTBP1 and LRRC32/GARP, that control activation of TGF-beta-2. Its function is as follows. Multifunctional protein that regulates various processes such as angiogenesis and heart development. Activation into mature form follows different steps: following cleavage of the proprotein in the Golgi apparatus, Latency-associated peptide (LAP) and Transforming growth factor beta-2 (TGF-beta-2) chains remain non-covalently linked rendering TGF-beta-2 inactive during storage in extracellular matrix. At the same time, LAP chain interacts with 'milieu molecules', such as LTBP1 and LRRC32/GARP, that control activation of TGF-beta-2 and maintain it in a latent state during storage in extracellular milieus. Once activated following release of LAP, TGF-beta-2 acts by binding to TGF-beta receptors (TGFBR1 and TGFBR2), which transduce signal. The chain is Transforming growth factor beta-2 proprotein (Tgfb2) from Mus musculus (Mouse).